The following is a 316-amino-acid chain: Biotin synthase (316 aa).

Residues 39–263 (NAIQCSTLLS…LFPKAYVRLS (225 aa)) form the Radical SAM core domain. Residues Cys-54, Cys-58, and Cys-61 each contribute to the [4Fe-4S] cluster site. [2Fe-2S] cluster-binding residues include Cys-98, Cys-129, Cys-189, and Arg-261.

This sequence belongs to the radical SAM superfamily. Biotin synthase family. In terms of assembly, homodimer. The cofactor is [4Fe-4S] cluster. [2Fe-2S] cluster serves as cofactor.

The catalysed reaction is (4R,5S)-dethiobiotin + (sulfur carrier)-SH + 2 reduced [2Fe-2S]-[ferredoxin] + 2 S-adenosyl-L-methionine = (sulfur carrier)-H + biotin + 2 5'-deoxyadenosine + 2 L-methionine + 2 oxidized [2Fe-2S]-[ferredoxin]. It functions in the pathway cofactor biosynthesis; biotin biosynthesis; biotin from 7,8-diaminononanoate: step 2/2. Catalyzes the conversion of dethiobiotin (DTB) to biotin by the insertion of a sulfur atom into dethiobiotin via a radical-based mechanism. This Acidithiobacillus ferrooxidans (strain ATCC 23270 / DSM 14882 / CIP 104768 / NCIMB 8455) (Ferrobacillus ferrooxidans (strain ATCC 23270)) protein is Biotin synthase.